Here is a 330-residue protein sequence, read N- to C-terminus: Aspartate--ammonia ligase (330 aa).

It belongs to the class-II aminoacyl-tRNA synthetase family. AsnA subfamily.

It is found in the cytoplasm. The catalysed reaction is L-aspartate + NH4(+) + ATP = L-asparagine + AMP + diphosphate + H(+). It participates in amino-acid biosynthesis; L-asparagine biosynthesis; L-asparagine from L-aspartate (ammonia route): step 1/1. The chain is Aspartate--ammonia ligase from Haemophilus influenzae (strain PittEE).